The primary structure comprises 453 residues: Macrophage scavenger receptor types I and II (453 aa).

At 1–50 (MAQWDDFPDQQEDTDSCTESVKFDARSVTALLPPHPKNGPTLQERMKSYK) the chain is on the cytoplasmic side. Serine 27 is modified (phosphoserine). Residues 51–76 (TALITLYLIVFVVLVPIIGIVAAQLL) form a helical; Signal-anchor for type II membrane protein membrane-spanning segment. A spacer region spans residues 77–108 (KWETKNCTVGSVNADISPSPEGKGNGSEDEMR). Over 77 to 453 (KWETKNCTVG…DEDAGVTCTT (377 aa)) the chain is Extracellular. Residues asparagine 82, asparagine 101, asparagine 142, asparagine 183, asparagine 220, asparagine 248, and asparagine 266 are each glycosylated (N-linked (GlcNAc...) asparagine). The stretch at 194 to 255 (ETLNGRVQEN…LNNITNDLRL (62 aa)) forms a coiled coil. Disordered stretches follow at residues 267–295 (ITLLQGPPGPPGEKGDRGPPGQNGIPGFP) and 313–349 (PGVRGFPGPMGKTGKPGLNGQKGQKGEKGSGSMQRQS). The Collagen-like domain maps to 272–343 (GPPGPPGEKG…KGQKGEKGSG (72 aa)). One can recognise an SRCR domain in the interval 352–452 (VRLVGGSGPH…HDEDAGVTCT (101 aa)). 3 disulfide bridges follow: cysteine 377–cysteine 441, cysteine 390–cysteine 451, and cysteine 421–cysteine 431.

Homotrimer. Interacts with MYO18A.

The protein localises to the membrane. Functionally, membrane glycoproteins implicated in the pathologic deposition of cholesterol in arterial walls during atherogenesis. Two types of receptor subunits exist. These receptors mediate the endocytosis of a diverse group of macromolecules, including modified low density lipoproteins (LDL). In Bos taurus (Bovine), this protein is Macrophage scavenger receptor types I and II (MSR1).